The sequence spans 185 residues: Ribosome-recycling factor (185 aa).

It belongs to the RRF family.

Its subcellular location is the cytoplasm. In terms of biological role, responsible for the release of ribosomes from messenger RNA at the termination of protein biosynthesis. May increase the efficiency of translation by recycling ribosomes from one round of translation to another. The polypeptide is Ribosome-recycling factor (Methylobacillus flagellatus (strain ATCC 51484 / DSM 6875 / VKM B-1610 / KT)).